A 427-amino-acid polypeptide reads, in one-letter code: Glutamate-1-semialdehyde 2,1-aminomutase (427 aa).

Residue lysine 267 is modified to N6-(pyridoxal phosphate)lysine.

The protein belongs to the class-III pyridoxal-phosphate-dependent aminotransferase family. HemL subfamily. Homodimer. Pyridoxal 5'-phosphate serves as cofactor.

The protein resides in the cytoplasm. The catalysed reaction is (S)-4-amino-5-oxopentanoate = 5-aminolevulinate. Its pathway is porphyrin-containing compound metabolism; protoporphyrin-IX biosynthesis; 5-aminolevulinate from L-glutamyl-tRNA(Glu): step 2/2. This is Glutamate-1-semialdehyde 2,1-aminomutase from Geotalea uraniireducens (strain Rf4) (Geobacter uraniireducens).